A 349-amino-acid chain; its full sequence is tRNA pseudouridine synthase D (349 aa).

A disordered region spans residues 1 to 22 (MTDAPLVTAELPGSGGSLRRSP). Asp78 (nucleophile) is an active-site residue. The TRUD domain maps to 150–304 (GLPNLFGPQR…AEGTRRAARL (155 aa)).

This sequence belongs to the pseudouridine synthase TruD family.

It catalyses the reaction uridine(13) in tRNA = pseudouridine(13) in tRNA. Responsible for synthesis of pseudouridine from uracil-13 in transfer RNAs. The polypeptide is tRNA pseudouridine synthase D (Anaeromyxobacter sp. (strain Fw109-5)).